Consider the following 100-residue polypeptide: Urease subunit gamma (100 aa).

This sequence belongs to the urease gamma subunit family. Heterotrimer of UreA (gamma), UreB (beta) and UreC (alpha) subunits. Three heterotrimers associate to form the active enzyme.

The protein localises to the cytoplasm. The catalysed reaction is urea + 2 H2O + H(+) = hydrogencarbonate + 2 NH4(+). It functions in the pathway nitrogen metabolism; urea degradation; CO(2) and NH(3) from urea (urease route): step 1/1. This Teredinibacter turnerae (strain ATCC 39867 / T7901) protein is Urease subunit gamma.